A 426-amino-acid polypeptide reads, in one-letter code: Tyrosine-protein phosphatase non-receptor type 20 (426 aa).

A compositionally biased stretch (basic residues) spans 1-10; that stretch reads MSSPRKVRGK. The segment at 1 to 58 is disordered; the sequence is MSSPRKVRGKTGRDNDEEEGNSGNLNLRNSLPSSSQKMTPTKPIFGNKMNSENVKPSH. Over residues 21–35 the composition is skewed to low complexity; sequence NSGNLNLRNSLPSSS. Position 76 is a phosphoserine (Ser76). Over residues 95–117 the composition is skewed to polar residues; it reads NSMDSETAGPSKTVSPVLSGSSR. A disordered region spans residues 95–124; the sequence is NSMDSETAGPSKTVSPVLSGSSRLSKDTET. Residue Ser127 is modified to Phosphoserine. The region spanning 165 to 418 is the Tyrosine-protein phosphatase domain; the sequence is IIREFLELEQ…QFCYEIVLEV (254 aa). Substrate contacts are provided by residues Asp329, 359 to 365, and Gln403; that span reads CSAGVGR. Cys359 (phosphocysteine intermediate) is an active-site residue.

Belongs to the protein-tyrosine phosphatase family. Non-receptor class subfamily. Testis-specific. Specifically expressed in testicular germ cells that undergo meiosis (at protein level).

It localises to the nucleus. Its subcellular location is the cytoplasm. It is found in the cytoskeleton. The protein localises to the microtubule organizing center. The protein resides in the centrosome. It carries out the reaction O-phospho-L-tyrosyl-[protein] + H2O = L-tyrosyl-[protein] + phosphate. In terms of biological role, tyrosine-protein phosphatase targeted to sites of actin polymerization in response of varied extracellular stimuli. Has tyrosine phosphatase activity towards various tyrosyl phosphorylated substrates. In Mus musculus (Mouse), this protein is Tyrosine-protein phosphatase non-receptor type 20 (Ptpn20).